The primary structure comprises 146 residues: Large ribosomal subunit protein mL41 (146 aa).

A mitochondrion-targeting transit peptide spans Met1–Ala16.

Belongs to the mitochondrion-specific ribosomal protein mL41 family. As to quaternary structure, component of the mitochondrial large ribosomal subunit (mt-LSU). Mature yeast 74S mitochondrial ribosomes consist of a small (37S) and a large (54S) subunit. The 37S small subunit contains a 15S ribosomal RNA (15S mt-rRNA) and 34 different proteins. The 54S large subunit contains a 21S rRNA (21S mt-rRNA) and 46 different proteins.

Its subcellular location is the mitochondrion. Its function is as follows. Component of the mitochondrial ribosome (mitoribosome), a dedicated translation machinery responsible for the synthesis of mitochondrial genome-encoded proteins, including at least some of the essential transmembrane subunits of the mitochondrial respiratory chain. The mitoribosomes are attached to the mitochondrial inner membrane and translation products are cotranslationally integrated into the membrane. This is Large ribosomal subunit protein mL41 (MRPL27) from Saccharomyces cerevisiae (strain ATCC 204508 / S288c) (Baker's yeast).